The following is a 116-amino-acid chain: Small ribosomal subunit protein bS16 (116 aa).

Residues 88-116 (RNNPKAAVPGKRMAELAKKKADRAAASAE) are disordered. The segment covering 99–110 (RMAELAKKKADR) has biased composition (basic and acidic residues).

This sequence belongs to the bacterial ribosomal protein bS16 family.

This Cereibacter sphaeroides (strain ATCC 17029 / ATH 2.4.9) (Rhodobacter sphaeroides) protein is Small ribosomal subunit protein bS16.